Consider the following 122-residue polypeptide: Large ribosomal subunit protein uL14c (122 aa).

Belongs to the universal ribosomal protein uL14 family. In terms of assembly, part of the 50S ribosomal subunit.

The protein resides in the plastid. The protein localises to the chloroplast. Its function is as follows. Binds to 23S rRNA. The chain is Large ribosomal subunit protein uL14c from Zygnema circumcarinatum (Green alga).